Reading from the N-terminus, the 406-residue chain is Argininosuccinate synthase (406 aa).

Residue 8-16 (AYSGGLDTT) coordinates ATP. The L-citrulline site is built by tyrosine 86 and serine 91. ATP is bound at residue glycine 116. The L-aspartate site is built by threonine 118, asparagine 122, and aspartate 123. Residue asparagine 122 participates in L-citrulline binding. Arginine 126, serine 175, serine 184, glutamate 261, and tyrosine 273 together coordinate L-citrulline.

This sequence belongs to the argininosuccinate synthase family. Type 1 subfamily. Homotetramer.

It is found in the cytoplasm. The enzyme catalyses L-citrulline + L-aspartate + ATP = 2-(N(omega)-L-arginino)succinate + AMP + diphosphate + H(+). Its pathway is amino-acid biosynthesis; L-arginine biosynthesis; L-arginine from L-ornithine and carbamoyl phosphate: step 2/3. The protein is Argininosuccinate synthase of Brachyspira hyodysenteriae (strain ATCC 49526 / WA1).